Reading from the N-terminus, the 119-residue chain is uncharacterized protein (119 aa).

The protein resides in the mitochondrion. It is found in the nucleus. This is an uncharacterized protein from Schizosaccharomyces pombe (strain 972 / ATCC 24843) (Fission yeast).